The sequence spans 502 residues: Lysine--tRNA ligase (502 aa).

The Mg(2+) site is built by Glu413 and Glu420.

It belongs to the class-II aminoacyl-tRNA synthetase family. In terms of assembly, homodimer. Mg(2+) is required as a cofactor.

It is found in the cytoplasm. It carries out the reaction tRNA(Lys) + L-lysine + ATP = L-lysyl-tRNA(Lys) + AMP + diphosphate. This chain is Lysine--tRNA ligase, found in Haemophilus influenzae (strain 86-028NP).